We begin with the raw amino-acid sequence, 403 residues long: Phosphoglycerate kinase (403 aa).

Substrate contacts are provided by residues 21 to 23 (DFN), R36, 59 to 62 (HLGR), R119, and R154. ATP-binding positions include K207, G299, E330, and 357 to 360 (GGDA).

Belongs to the phosphoglycerate kinase family. As to quaternary structure, monomer.

Its subcellular location is the cytoplasm. The enzyme catalyses (2R)-3-phosphoglycerate + ATP = (2R)-3-phospho-glyceroyl phosphate + ADP. Its pathway is carbohydrate degradation; glycolysis; pyruvate from D-glyceraldehyde 3-phosphate: step 2/5. The chain is Phosphoglycerate kinase from Chlamydia caviae (strain ATCC VR-813 / DSM 19441 / 03DC25 / GPIC) (Chlamydophila caviae).